The chain runs to 163 residues: Phosphopantetheine adenylyltransferase (163 aa).

T10 contacts substrate. ATP contacts are provided by residues 10–11 (TF) and H18. Substrate is bound by residues K42, L74, and R88. Residues 89 to 91 (GLR), E99, and 124 to 130 (NSFISST) contribute to the ATP site.

The protein belongs to the bacterial CoaD family. In terms of assembly, homohexamer. Mg(2+) serves as cofactor.

The protein resides in the cytoplasm. The catalysed reaction is (R)-4'-phosphopantetheine + ATP + H(+) = 3'-dephospho-CoA + diphosphate. It participates in cofactor biosynthesis; coenzyme A biosynthesis; CoA from (R)-pantothenate: step 4/5. Its function is as follows. Reversibly transfers an adenylyl group from ATP to 4'-phosphopantetheine, yielding dephospho-CoA (dPCoA) and pyrophosphate. The chain is Phosphopantetheine adenylyltransferase from Shewanella baltica (strain OS155 / ATCC BAA-1091).